Consider the following 306-residue polypeptide: Glutathione transport system permease protein GsiC (306 aa).

The Cytoplasmic portion of the chain corresponds to 1–8; sequence MLNYFIKR. The helical transmembrane segment at 9-29 threads the bilayer; the sequence is LLGLIPTLLIVMVLVFLFVHL. At 30 to 98 the chain is on the periplasmic side; it reads LPGDPARLAA…QEIALRFMPT (69 aa). The 198-residue stretch at 95–292 folds into the ABC transmembrane type-1 domain; sequence FMPTFWLTVC…LEFILINLLV (198 aa). The helical transmembrane segment at 99–119 threads the bilayer; that stretch reads FWLTVCSMAWAVIFGMAIGIV. Residues 120-130 lie on the Cytoplasmic side of the membrane; sequence SAVWRNGWPDR. A helical transmembrane segment spans residues 131–151; sequence IGMTLAVSGLSFPAFALGMLL. The Periplasmic segment spans residues 152-168; it reads MQIFSVELGWLPTVGAD. Residues 169–189 form a helical membrane-spanning segment; the sequence is TWLHYILPSLTLGAAVAAVMA. Residues 190–228 are Cytoplasmic-facing; that stretch reads RFTRASFVDVLQEDYMRTARAKGVRESLVVLKHGLRNAL. A helical transmembrane segment spans residues 229–249; that stretch reads IPVVTMMGLQFGFLLGGSIVV. Residues 250 to 278 are Periplasmic-facing; that stretch reads EKVFNWPGLGRLLVDSVEMRDYPVIQAEV. A helical transmembrane segment spans residues 279-299; sequence LLFSLEFILINLLVDMLYAAI. Residues 300 to 306 lie on the Cytoplasmic side of the membrane; that stretch reads NPAIRYK.

Belongs to the binding-protein-dependent transport system permease family. In terms of assembly, the complex is composed of two ATP-binding proteins (GsiA), two transmembrane proteins (GsiC and GsiD) and a solute-binding protein (GsiB).

It is found in the cell inner membrane. Its function is as follows. Part of the ABC transporter complex GsiABCD involved in glutathione import. Probably responsible for the translocation of the substrate across the membrane. This Pectobacterium atrosepticum (strain SCRI 1043 / ATCC BAA-672) (Erwinia carotovora subsp. atroseptica) protein is Glutathione transport system permease protein GsiC.